The primary structure comprises 122 residues: Large ribosomal subunit protein uL14 (122 aa).

The protein belongs to the universal ribosomal protein uL14 family. Part of the 50S ribosomal subunit. Forms a cluster with proteins L3 and L19. In the 70S ribosome, L14 and L19 interact and together make contacts with the 16S rRNA in bridges B5 and B8.

In terms of biological role, binds to 23S rRNA. Forms part of two intersubunit bridges in the 70S ribosome. The polypeptide is Large ribosomal subunit protein uL14 (Chlorobium luteolum (strain DSM 273 / BCRC 81028 / 2530) (Pelodictyon luteolum)).